The chain runs to 169 residues: TPD1 protein homolog 1B (169 aa).

An N-terminal signal peptide occupies residues Met1–Ala25.

In terms of tissue distribution, expressed in roots, and at low levels in anthers during meiosis.

Functionally, may play a role during anther development. The polypeptide is TPD1 protein homolog 1B (Oryza sativa subsp. japonica (Rice)).